Here is a 129-residue protein sequence, read N- to C-terminus: D-ribose pyranase (129 aa).

Histidine 20 (proton donor) is an active-site residue. Substrate-binding positions include aspartate 28, histidine 96, and 118–120; that span reads YAN.

This sequence belongs to the RbsD / FucU family. RbsD subfamily. As to quaternary structure, homodecamer.

It localises to the cytoplasm. The catalysed reaction is beta-D-ribopyranose = beta-D-ribofuranose. It functions in the pathway carbohydrate metabolism; D-ribose degradation; D-ribose 5-phosphate from beta-D-ribopyranose: step 1/2. Functionally, catalyzes the interconversion of beta-pyran and beta-furan forms of D-ribose. The sequence is that of D-ribose pyranase from Staphylococcus saprophyticus subsp. saprophyticus (strain ATCC 15305 / DSM 20229 / NCIMB 8711 / NCTC 7292 / S-41).